The chain runs to 72 residues: Translation initiation factor IF-1 (72 aa).

In terms of domain architecture, S1-like spans 1-72 (MSKEDMIEFS…TKGRITFRFK (72 aa)).

It belongs to the IF-1 family. As to quaternary structure, component of the 30S ribosomal translation pre-initiation complex which assembles on the 30S ribosome in the order IF-2 and IF-3, IF-1 and N-formylmethionyl-tRNA(fMet); mRNA recruitment can occur at any time during PIC assembly.

It is found in the cytoplasm. One of the essential components for the initiation of protein synthesis. Stabilizes the binding of IF-2 and IF-3 on the 30S subunit to which N-formylmethionyl-tRNA(fMet) subsequently binds. Helps modulate mRNA selection, yielding the 30S pre-initiation complex (PIC). Upon addition of the 50S ribosomal subunit IF-1, IF-2 and IF-3 are released leaving the mature 70S translation initiation complex. The protein is Translation initiation factor IF-1 of Granulibacter bethesdensis (strain ATCC BAA-1260 / CGDNIH1).